The sequence spans 170 residues: Small ribosomal subunit protein bS18c (170 aa).

The segment at 1 to 61 is disordered; the sequence is MYTSKQPFLK…RRPRIGPGDR (61 aa). The segment covering 13-26 has biased composition (polar residues); the sequence is QPFSKSKQTFNKSK. A compositionally biased stretch (basic residues) spans 27–55; it reads QPFRKSKQTFRKFKQPFRKSKQPFRRRPR.

This sequence belongs to the bacterial ribosomal protein bS18 family. As to quaternary structure, part of the 30S ribosomal subunit.

It localises to the plastid. The protein resides in the chloroplast. In Hordeum vulgare (Barley), this protein is Small ribosomal subunit protein bS18c.